We begin with the raw amino-acid sequence, 456 residues long: Imidazolonepropionase (456 aa).

Fe(3+) is bound by residues His104 and His106. Residues His104 and His106 each contribute to the Zn(2+) site. 3 residues coordinate 4-imidazolone-5-propanoate: Arg113, Tyr176, and His209. Residue Tyr176 coordinates N-formimidoyl-L-glutamate. Residue His274 coordinates Fe(3+). His274 is a Zn(2+) binding site. A 4-imidazolone-5-propanoate-binding site is contributed by Gln277. Asp349 provides a ligand contact to Fe(3+). Asp349 lines the Zn(2+) pocket. The N-formimidoyl-L-glutamate site is built by Asn351 and Gly353. Ser354 serves as a coordination point for 4-imidazolone-5-propanoate.

The protein belongs to the metallo-dependent hydrolases superfamily. HutI family. Zn(2+) is required as a cofactor. Requires Fe(3+) as cofactor.

Its subcellular location is the cytoplasm. It carries out the reaction 4-imidazolone-5-propanoate + H2O = N-formimidoyl-L-glutamate. It functions in the pathway amino-acid degradation; L-histidine degradation into L-glutamate; N-formimidoyl-L-glutamate from L-histidine: step 3/3. Functionally, catalyzes the hydrolytic cleavage of the carbon-nitrogen bond in imidazolone-5-propanoate to yield N-formimidoyl-L-glutamate. It is the third step in the universal histidine degradation pathway. In Verminephrobacter eiseniae (strain EF01-2), this protein is Imidazolonepropionase.